We begin with the raw amino-acid sequence, 237 residues long: 2-C-methyl-D-erythritol 4-phosphate cytidylyltransferase (237 aa).

This sequence belongs to the IspD/TarI cytidylyltransferase family. IspD subfamily.

The catalysed reaction is 2-C-methyl-D-erythritol 4-phosphate + CTP + H(+) = 4-CDP-2-C-methyl-D-erythritol + diphosphate. The protein operates within isoprenoid biosynthesis; isopentenyl diphosphate biosynthesis via DXP pathway; isopentenyl diphosphate from 1-deoxy-D-xylulose 5-phosphate: step 2/6. Catalyzes the formation of 4-diphosphocytidyl-2-C-methyl-D-erythritol from CTP and 2-C-methyl-D-erythritol 4-phosphate (MEP). In Vibrio vulnificus (strain YJ016), this protein is 2-C-methyl-D-erythritol 4-phosphate cytidylyltransferase.